A 286-amino-acid chain; its full sequence is uncharacterized protein (286 aa).

Residues 152–182 form a disordered region; sequence YPSTTTSVTPGKKGEKTTKVDGFSSPLNQDT. A helical transmembrane segment spans residues 198-218; that stretch reads VLIAVTLFVSGIAITVFVIFE. A disordered region spans residues 239 to 278; sequence RRPRKEDQQPGTAESQSDTQPKKVGQEAPNSSSPKKAVEI. The segment covering 247–257 has biased composition (polar residues); the sequence is QPGTAESQSDT.

It is found in the membrane. This is an uncharacterized protein from Bos taurus (Bovine).